The following is a 490-amino-acid chain: GTPase Der (490 aa).

2 EngA-type G domains span residues 3 to 166 (PVVA…MEDL) and 203 to 376 (IKLA…DSST). Residues 9-16 (GRPNVGKS), 56-60 (DTGGI), 118-121 (NKTD), 209-216 (GRPNVGKS), 256-260 (DTAGV), and 321-324 (NKWD) contribute to the GTP site. A KH-like domain is found at 377-461 (RRVGTSMLTR…PIRIQFKEGE (85 aa)).

This sequence belongs to the TRAFAC class TrmE-Era-EngA-EngB-Septin-like GTPase superfamily. EngA (Der) GTPase family. Associates with the 50S ribosomal subunit.

Its function is as follows. GTPase that plays an essential role in the late steps of ribosome biogenesis. The polypeptide is GTPase Der (Shigella flexneri serotype 5b (strain 8401)).